Consider the following 392-residue polypeptide: uncharacterized protein (392 aa).

The protein belongs to the mimivirus L17x/L18x family.

This is an uncharacterized protein from Acanthamoeba polyphaga (Amoeba).